The following is a 214-amino-acid chain: Ribonuclease T (214 aa).

The 176-residue stretch at V20–F195 folds into the Exonuclease domain. Mg(2+) is bound by residues D23, E25, H182, and D187. H182 serves as the catalytic Proton donor/acceptor.

It belongs to the RNase T family. Homodimer. Mg(2+) is required as a cofactor.

Its function is as follows. Trims short 3' overhangs of a variety of RNA species, leaving a one or two nucleotide 3' overhang. Responsible for the end-turnover of tRNA: specifically removes the terminal AMP residue from uncharged tRNA (tRNA-C-C-A). Also appears to be involved in tRNA biosynthesis. In Vibrio parahaemolyticus serotype O3:K6 (strain RIMD 2210633), this protein is Ribonuclease T.